We begin with the raw amino-acid sequence, 67 residues long: UPF0253 protein VV2574 (67 aa).

The protein belongs to the UPF0253 family.

The protein is UPF0253 protein VV2574 of Vibrio vulnificus (strain YJ016).